A 716-amino-acid chain; its full sequence is Splicing factor Cactin (716 aa).

Positions 1 to 104 (MGSHGKGKRD…SKKAQKKALR (104 aa)) are disordered. Positions 10-22 (DRSGRQKKRRDES) are enriched in basic and acidic residues. The span at 25-45 (GSESESYTSDSDGSDDLSPPR) shows a compositional bias: low complexity. A compositionally biased stretch (basic residues) spans 46–61 (SSRRKKGSSSRRTRRR). The span at 81-95 (SSKDYSEEKVTEYMS) shows a compositional bias: basic and acidic residues. Residues 153–201 (SVKAEKRRHRERMTEVEKVKKRREERAVEKARHEEEMALLARERARAEF) adopt a coiled-coil conformation. Position 450 is a phosphoserine (S450). A disordered region spans residues 466–525 (VEENEEEINDTNLSDAEEAFSPEPVAEEEEADEAAEAAGSFSPELMHGDDREEAIDPEED). Residues 468 to 500 (ENEEEINDTNLSDAEEAFSPEPVAEEEEADEAA) are compositionally biased toward acidic residues.

The protein belongs to the CACTIN family. Interacts with At5g63440.

It localises to the nucleus speckle. In terms of biological role, plays a role in pre-mRNA splicing by facilitating excision of a subset of introns. Required for embryogenesis. The protein is Splicing factor Cactin (CTN) of Arabidopsis thaliana (Mouse-ear cress).